Here is a 392-residue protein sequence, read N- to C-terminus: Tryptophan synthase beta chain (392 aa).

At Lys84 the chain carries N6-(pyridoxal phosphate)lysine.

The protein belongs to the TrpB family. Tetramer of two alpha and two beta chains. Requires pyridoxal 5'-phosphate as cofactor.

The enzyme catalyses (1S,2R)-1-C-(indol-3-yl)glycerol 3-phosphate + L-serine = D-glyceraldehyde 3-phosphate + L-tryptophan + H2O. It participates in amino-acid biosynthesis; L-tryptophan biosynthesis; L-tryptophan from chorismate: step 5/5. Functionally, the beta subunit is responsible for the synthesis of L-tryptophan from indole and L-serine. The sequence is that of Tryptophan synthase beta chain from Campylobacter jejuni subsp. jejuni serotype O:6 (strain 81116 / NCTC 11828).